The sequence spans 227 residues: UPF0173 metal-dependent hydrolase Cmaq_1073 (227 aa).

This sequence belongs to the UPF0173 family.

This is UPF0173 metal-dependent hydrolase Cmaq_1073 from Caldivirga maquilingensis (strain ATCC 700844 / DSM 13496 / JCM 10307 / IC-167).